Here is an 85-residue protein sequence, read N- to C-terminus: Sec-independent protein translocase protein TatA (85 aa).

Residues 1–21 form a helical membrane-spanning segment; sequence MGSMSIWHWLVVGVLVLLLFG. A disordered region spans residues 39-85; sequence FKKGMSEEDEPTQPAEPRPTPRLQQQPPIEPNADPKLQPMQDDRPQH.

It belongs to the TatA/E family. As to quaternary structure, the Tat system comprises two distinct complexes: a TatABC complex, containing multiple copies of TatA, TatB and TatC subunits, and a separate TatA complex, containing only TatA subunits. Substrates initially bind to the TatABC complex, which probably triggers association of the separate TatA complex to form the active translocon.

The protein resides in the cell inner membrane. Its function is as follows. Part of the twin-arginine translocation (Tat) system that transports large folded proteins containing a characteristic twin-arginine motif in their signal peptide across membranes. TatA could form the protein-conducting channel of the Tat system. The polypeptide is Sec-independent protein translocase protein TatA (Rhizorhabdus wittichii (strain DSM 6014 / CCUG 31198 / JCM 15750 / NBRC 105917 / EY 4224 / RW1) (Sphingomonas wittichii)).